The following is a 273-amino-acid chain: tRNA (guanine-N(7)-)-methyltransferase A (273 aa).

The S-adenosyl-L-methionine site is built by G86, E109, R111, N142, A143, and L162. D165 is a catalytic residue. The alphaC helix stretch occupies residues 166-174 (PHFKKTKHK). S-adenosyl-L-methionine is bound by residues T240 and E242. An alpha6 helix region spans residues 240–248 (TEEGKKVQR).

This sequence belongs to the class I-like SAM-binding methyltransferase superfamily. TrmB family. In terms of assembly, catalytic component of the METTL1-WDR4 complex, composed of mettl1 and wdr4.

The protein localises to the nucleus. It carries out the reaction guanosine(46) in tRNA + S-adenosyl-L-methionine = N(7)-methylguanosine(46) in tRNA + S-adenosyl-L-homocysteine. The catalysed reaction is a guanosine in mRNA + S-adenosyl-L-methionine = an N(7)-methylguanosine in mRNA + S-adenosyl-L-homocysteine. The enzyme catalyses a guanosine in miRNA + S-adenosyl-L-methionine = an N(7)-methylguanosine in miRNA + S-adenosyl-L-homocysteine. The protein operates within tRNA modification; N(7)-methylguanine-tRNA biosynthesis. Catalytic component of METTL1-WDR4 methyltransferase complex that mediates the formation of N(7)-methylguanine in a subset of RNA species, such as tRNAs, mRNAs and microRNAs (miRNAs). Catalyzes the formation of N(7)-methylguanine at position 46 (m7G46) in a large subset of tRNAs that contain the 5'-RAGGU-3' motif within the variable loop. M7G46 interacts with C13-G22 in the D-loop to stabilize tRNA tertiary structure and protect tRNAs from decay. Also acts as a methyltransferase for a subset of internal N(7)-methylguanine in mRNAs. Internal N(7)-methylguanine methylation of mRNAs in response to stress promotes their relocalization to stress granules, thereby suppressing their translation. Also methylates a specific subset of miRNAs. This is tRNA (guanine-N(7)-)-methyltransferase A (mettl1-A) from Xenopus tropicalis (Western clawed frog).